The chain runs to 156 residues: Arginine repressor (156 aa).

The protein belongs to the ArgR family.

The protein resides in the cytoplasm. It functions in the pathway amino-acid biosynthesis; L-arginine biosynthesis [regulation]. In terms of biological role, regulates arginine biosynthesis genes. This chain is Arginine repressor, found in Salmonella agona (strain SL483).